Here is an 86-residue protein sequence, read N- to C-terminus: Toxin Td2 (86 aa).

The signal sequence occupies residues 1–20; the sequence is MTRFVLFLNCFFLICMVVEC. The region spanning 21–83 is the LCN-type CS-alpha/beta domain; sequence KEGYLMGADG…TWDRATNTCG (63 aa). 4 disulfide bridges follow: Cys31–Cys82, Cys35–Cys57, Cys43–Cys63, and Cys47–Cys65. Arg84 bears the Arginine amide mark.

As to expression, expressed by the venom gland.

It is found in the secreted. Its function is as follows. Beta toxins bind voltage-independently at site-4 of sodium channels (Nav) and shift the voltage of activation toward more negative potentials thereby affecting sodium channel activation and promoting spontaneous and repetitive firing. This is Toxin Td2 from Tityus discrepans (Venezuelan scorpion).